An 86-amino-acid chain; its full sequence is Protein Tat (86 aa).

Positions 1 to 24 are interaction with human CREBBP; the sequence is MEPVDPRLEPWKHPGSQPKTACTN. The segment at 1–48 is transactivation; it reads MEPVDPRLEPWKHPGSQPKTACTNCYCKKCCFHCQVCFITKALGISYG. Positions 22, 25, and 27 each coordinate Zn(2+). Residues 22-37 are cysteine-rich; sequence CTNCYCKKCCFHCQVC. At K28 the chain carries N6-acetyllysine; by host PCAF. 4 residues coordinate Zn(2+): C30, H33, C34, and C37. A core region spans residues 38 to 48; that stretch reads FITKALGISYG. A compositionally biased stretch (basic residues) spans 48–58; sequence GRKKRRQRRRA. The tract at residues 48–86 is disordered; it reads GRKKRRQRRRAPQGSQTHQVSLSKQPTSQSRGDPTGPKE. The short motif at 49-57 is the Nuclear localization signal, RNA-binding (TAR), and protein transduction element; sequence RKKRRQRRR. The interval 49 to 86 is interaction with the host capping enzyme RNGTT; the sequence is RKKRRQRRRAPQGSQTHQVSLSKQPTSQSRGDPTGPKE. Residues K50 and K51 each carry the N6-acetyllysine; by host EP300 and GCN5L2 modification. Asymmetric dimethylarginine; by host PRMT6 is present on residues R52 and R53. A compositionally biased stretch (polar residues) spans 60–79; the sequence is QGSQTHQVSLSKQPTSQSRG. A Glycyl lysine isopeptide (Lys-Gly) (interchain with G-Cter in ubiquitin) cross-link involves residue K71. Positions 78 to 80 match the Cell attachment site motif; it reads RGD.

This sequence belongs to the lentiviruses Tat family. In terms of assembly, interacts with host CCNT1. Associates with the P-TEFb complex composed at least of Tat, P-TEFb (CDK9 and CCNT1), TAR RNA, RNA Pol II. Recruits the HATs CREBBP, TAF1/TFIID, EP300, PCAF and GCN5L2. Interacts with host KAT5/Tip60; this interaction targets the latter to degradation. Interacts with the host deacetylase SIRT1. Interacts with host capping enzyme RNGTT; this interaction stimulates RNGTT. Binds to host KDR, and to the host integrins ITGAV/ITGB3 and ITGA5/ITGB1. Interacts with host KPNB1/importin beta-1 without previous binding to KPNA1/importin alpha-1. Interacts with EIF2AK2. Interacts with host nucleosome assembly protein NAP1L1; this interaction may be required for the transport of Tat within the nucleus, since the two proteins interact at the nuclear rim. Interacts with host C1QBP/SF2P32; this interaction involves lysine-acetylated Tat. Interacts with the host chemokine receptors CCR2, CCR3 and CXCR4. Interacts with host DPP4/CD26; this interaction may trigger an anti-proliferative effect. Interacts with host LDLR. Interacts with the host extracellular matrix metalloproteinase MMP1. Interacts with host PRMT6; this interaction mediates Tat's methylation. Interacts with, and is ubiquitinated by MDM2/Hdm2. Interacts with host PSMC3 and HTATIP2. Interacts with STAB1; this interaction may overcome SATB1-mediated repression of IL2 and IL2RA (interleukin) in T cells by binding to the same domain than HDAC1. Interacts (when acetylated) with human CDK13, thereby increasing HIV-1 mRNA splicing and promoting the production of the doubly spliced HIV-1 protein Nef. Interacts with host TBP; this interaction modulates the activity of transcriptional pre-initiation complex. Interacts with host RELA. Interacts with host PLSCR1; this interaction negatively regulates Tat transactivation activity by altering its subcellular distribution. Post-translationally, asymmetrical arginine methylation by host PRMT6 seems to diminish the transactivation capacity of Tat and affects the interaction with host CCNT1. Acetylation by EP300, CREBBP, GCN5L2/GCN5 and PCAF regulates the transactivation activity of Tat. EP300-mediated acetylation of Lys-50 promotes dissociation of Tat from the TAR RNA through the competitive binding to PCAF's bromodomain. In addition, the non-acetylated Tat's N-terminus can also interact with PCAF. PCAF-mediated acetylation of Lys-28 enhances Tat's binding to CCNT1. Lys-50 is deacetylated by SIRT1. In terms of processing, polyubiquitination by host MDM2 does not target Tat to degradation, but activates its transactivation function and fosters interaction with CCNT1 and TAR RNA. Post-translationally, phosphorylated by EIF2AK2 on serine and threonine residues adjacent to the basic region important for TAR RNA binding and function. Phosphorylation of Tat by EIF2AK2 is dependent on the prior activation of EIF2AK2 by dsRNA.

It is found in the host nucleus. Its subcellular location is the host nucleolus. It localises to the host cytoplasm. The protein resides in the secreted. In terms of biological role, transcriptional activator that increases RNA Pol II processivity, thereby increasing the level of full-length viral transcripts. Recognizes a hairpin structure at the 5'-LTR of the nascent viral mRNAs referred to as the transactivation responsive RNA element (TAR) and recruits the cyclin T1-CDK9 complex (P-TEFb complex) that will in turn hyperphosphorylate the RNA polymerase II to allow efficient elongation. The CDK9 component of P-TEFb and other Tat-activated kinases hyperphosphorylate the C-terminus of RNA Pol II that becomes stabilized and much more processive. Other factors such as HTATSF1/Tat-SF1, SUPT5H/SPT5, and HTATIP2 are also important for Tat's function. Besides its effect on RNA Pol II processivity, Tat induces chromatin remodeling of proviral genes by recruiting the histone acetyltransferases (HATs) CREBBP, EP300 and PCAF to the chromatin. This also contributes to the increase in proviral transcription rate, especially when the provirus integrates in transcriptionally silent region of the host genome. To ensure maximal activation of the LTR, Tat mediates nuclear translocation of NF-kappa-B by interacting with host RELA. Through its interaction with host TBP, Tat may also modulate transcription initiation. Tat can reactivate a latently infected cell by penetrating in it and transactivating its LTR promoter. In the cytoplasm, Tat is thought to act as a translational activator of HIV-1 mRNAs. Extracellular circulating Tat can be endocytosed by surrounding uninfected cells via the binding to several surface receptors such as CD26, CXCR4, heparan sulfate proteoglycans (HSPG) or LDLR. Neurons are rarely infected, but they internalize Tat via their LDLR. Through its interaction with nuclear HATs, Tat is potentially able to control the acetylation-dependent cellular gene expression. Modulates the expression of many cellular genes involved in cell survival, proliferation or in coding for cytokines or cytokine receptors. Tat plays a role in T-cell and neurons apoptosis. Tat induced neurotoxicity and apoptosis probably contribute to neuroAIDS. Circulating Tat also acts as a chemokine-like and/or growth factor-like molecule that binds to specific receptors on the surface of the cells, affecting many cellular pathways. In the vascular system, Tat binds to ITGAV/ITGB3 and ITGA5/ITGB1 integrins dimers at the surface of endothelial cells and competes with bFGF for heparin-binding sites, leading to an excess of soluble bFGF. This is Protein Tat from Human immunodeficiency virus type 1 group M subtype B (isolate PCV12) (HIV-1).